The sequence spans 115 residues: Double-headed protease inhibitor, submandibular gland (115 aa).

Kazal-like domains follow at residues 6-66 and 67-115; these read IGRE…ACDI and ECTE…HGEC. 6 disulfide bridges follow: Cys-12–Cys-46, Cys-24–Cys-43, Cys-32–Cys-64, Cys-68–Cys-97, Cys-75–Cys-94, and Cys-83–Cys-115.

Its subcellular location is the secreted. This inhibitor is composed of two homologous actively inhibiting halves: one which inhibits trypsin, the other which inhibits elastase. The chain is Double-headed protease inhibitor, submandibular gland from Canis lupus familiaris (Dog).